A 209-amino-acid polypeptide reads, in one-letter code: Protein lin-28 homolog A (209 aa).

The disordered stretch occupies residues 1–31 (MGSVSNQQFAGGCAKAAEKAPEEAPPDAARA). N-acetylglycine is present on G2. Position 3 is a phosphoserine (S3). The region spanning 39–112 (HGAGICKWFN…GLESIRVTGP (74 aa)) is the CSD domain. Positions 113–136 (GGVFCIGSERRPKGKNMQKRRSKG) are flexible linker. Phosphoserine is present on S120. CCHC-type zinc fingers lie at residues 137–154 (DRCY…ECKL) and 159–176 (KKCH…SCPL). A disordered region spans residues 177–209 (KAQQGPSSQGKPAYFREEEEEIHSPALLPEAQN). S200 is subject to Phosphoserine.

The protein belongs to the lin-28 family. As to quaternary structure, monomer. During skeletal muscle differentiation, associated with translation initiation complexes in the polysomal compartment. Directly interacts with EIF3S2. Interacts with NCL in an RNA-dependent manner. Interacts with TUT4 in the presence of pre-let-7 RNA. As to expression, expressed in embryonic stem cells (ES cells), spermatagonia and testis. Expressed in numerous epithelial tissues including the epithelia of the small intestine, the intralobular duct epithelium of the mammary gland and the epithelia of Henle's loop in the kidney and in the collecting duct (at protein level). Also expressed in the myocardium and skeletal muscle (at protein level).

It is found in the cytoplasm. The protein localises to the rough endoplasmic reticulum. The protein resides in the P-body. It localises to the stress granule. Its subcellular location is the nucleus. It is found in the nucleolus. In terms of biological role, RNA-binding protein that inhibits processing of pre-let-7 miRNAs and regulates translation of mRNAs that control developmental timing, pluripotency and metabolism. Seems to recognize a common structural G-quartet (G4) feature in its miRNA and mRNA targets. 'Translational enhancer' that drives specific mRNAs to polysomes and increases the efficiency of protein synthesis. Its association with the translational machinery and target mRNAs results in an increased number of initiation events per molecule of mRNA and, indirectly, in mRNA stabilization. Binds IGF2 mRNA, MYOD1 mRNA, ARBP/36B4 ribosomal protein mRNA and its own mRNA. Essential for skeletal muscle differentiation program through the translational up-regulation of IGF2 expression. Suppressor of microRNA (miRNA) biogenesis, including that of let-7, miR107, miR-143 and miR-200c. Specifically binds the miRNA precursors (pre-miRNAs), recognizing an 5'-GGAG-3' motif found in pre-miRNA terminal loop, and recruits TUT4 and TUT7 uridylyltransferaseS. This results in the terminal uridylation of target pre-miRNAs. Uridylated pre-miRNAs fail to be processed by Dicer and undergo degradation. The repression of let-7 expression is required for normal development and contributes to maintain the pluripotent state by preventing let-7-mediated differentiation of embryonic stem cells. Localized to the periendoplasmic reticulum area, binds to a large number of spliced mRNAs and inhibits the translation of mRNAs destined for the ER, reducing the synthesis of transmembrane proteins, ER or Golgi lumen proteins, and secretory proteins. Binds to and enhances the translation of mRNAs for several metabolic enzymes, such as PFKP, PDHA1 or SDHA, increasing glycolysis and oxidative phosphorylation. Which, with the let-7 repression may enhance tissue repair in adult tissue. The chain is Protein lin-28 homolog A (Lin28a) from Mus musculus (Mouse).